The primary structure comprises 365 residues: NAC domain-containing protein 43 (365 aa).

Residues 16–180 (VPPGFRFHPT…GWVVCRIFKK (165 aa)) form the NAC domain. A DNA-binding region spans residues 116–186 (IGMRKTLVFY…IFKKKNLHKT (71 aa)).

Expressed in various aboveground tissues undergoing thickening of the lignified secondary wall such as anthers, filaments of stamens, the base of carpels, styles, the boundaries between siliques and pedicels, the midrib of leaf veins, and inflorescence stems, specifically in interfascicular fibers (sclerenchyma), cells differentiating into vascular vessels, and xylary fibers (secondary xylem).

Its subcellular location is the nucleus. In terms of biological role, transcription activator of genes involved in biosynthesis of secondary walls. Together with NST2 and NST3, required for the secondary cell wall thickening of sclerenchymatous fibers, secondary xylem (tracheary elements), and of the anther endocethium, which is necessary for anther dehiscence. May also regulate the secondary cell wall lignification of other tissues. The sequence is that of NAC domain-containing protein 43 (NAC043) from Arabidopsis thaliana (Mouse-ear cress).